The chain runs to 127 residues: Probable 4-amino-4-deoxy-L-arabinose-phosphoundecaprenol flippase subunit ArnF (127 aa).

Topologically, residues 1–2 (MG) are cytoplasmic. A helical membrane pass occupies residues 3-23 (LLFALGSVVLVSAAQLLLKWA). Topologically, residues 24-47 (MIQLPDISQLPQFLSSLSQFPLPT) are periplasmic. A helical membrane pass occupies residues 48 to 68 (AALFLGLLAYALSMLCWLLAL). The Cytoplasmic segment spans residues 69 to 76 (KRLPLSRA). A helical membrane pass occupies residues 77–97 (YPLLSLSYLLVWLAALWLPGL). Residues 98-102 (NEVFR) are Periplasmic-facing. The chain crosses the membrane as a helical span at residues 103-123 (WGKLAGAGLIVSGLLLICWPA). At 124-127 (AKTR) the chain is on the cytoplasmic side.

It belongs to the ArnF family. As to quaternary structure, heterodimer of ArnE and ArnF.

It localises to the cell inner membrane. Its pathway is bacterial outer membrane biogenesis; lipopolysaccharide biosynthesis. Its function is as follows. Translocates 4-amino-4-deoxy-L-arabinose-phosphoundecaprenol (alpha-L-Ara4N-phosphoundecaprenol) from the cytoplasmic to the periplasmic side of the inner membrane. The protein is Probable 4-amino-4-deoxy-L-arabinose-phosphoundecaprenol flippase subunit ArnF of Erwinia tasmaniensis (strain DSM 17950 / CFBP 7177 / CIP 109463 / NCPPB 4357 / Et1/99).